We begin with the raw amino-acid sequence, 343 residues long: Biotin synthase (343 aa).

The Radical SAM core domain occupies 36-254 (NTIQISTLLS…IAVARIMMPK (219 aa)). Cys51, Cys55, and Cys58 together coordinate [4Fe-4S] cluster. The [2Fe-2S] cluster site is built by Cys95, Cys126, Cys186, and Arg258.

The protein belongs to the radical SAM superfamily. Biotin synthase family. As to quaternary structure, homodimer. [4Fe-4S] cluster is required as a cofactor. The cofactor is [2Fe-2S] cluster.

It carries out the reaction (4R,5S)-dethiobiotin + (sulfur carrier)-SH + 2 reduced [2Fe-2S]-[ferredoxin] + 2 S-adenosyl-L-methionine = (sulfur carrier)-H + biotin + 2 5'-deoxyadenosine + 2 L-methionine + 2 oxidized [2Fe-2S]-[ferredoxin]. The protein operates within cofactor biosynthesis; biotin biosynthesis; biotin from 7,8-diaminononanoate: step 2/2. In terms of biological role, catalyzes the conversion of dethiobiotin (DTB) to biotin by the insertion of a sulfur atom into dethiobiotin via a radical-based mechanism. This chain is Biotin synthase, found in Buchnera aphidicola subsp. Acyrthosiphon pisum (strain APS) (Acyrthosiphon pisum symbiotic bacterium).